A 314-amino-acid polypeptide reads, in one-letter code: Homoserine O-succinyltransferase (314 aa).

C142 acts as the Acyl-thioester intermediate in catalysis. Substrate contacts are provided by K163 and S192. H235 (proton acceptor) is an active-site residue. E237 is a catalytic residue. R249 serves as a coordination point for substrate.

The protein belongs to the MetA family.

The protein resides in the cytoplasm. It carries out the reaction L-homoserine + succinyl-CoA = O-succinyl-L-homoserine + CoA. The protein operates within amino-acid biosynthesis; L-methionine biosynthesis via de novo pathway; O-succinyl-L-homoserine from L-homoserine: step 1/1. Its function is as follows. Transfers a succinyl group from succinyl-CoA to L-homoserine, forming succinyl-L-homoserine. The sequence is that of Homoserine O-succinyltransferase from Shewanella sediminis (strain HAW-EB3).